The primary structure comprises 368 residues: Ribosomal RNA large subunit methyltransferase M (368 aa).

S-adenosyl-L-methionine-binding positions include S189, 222 to 225 (CPGG), D241, D261, and D278. Catalysis depends on K307, which acts as the Proton acceptor.

The protein belongs to the class I-like SAM-binding methyltransferase superfamily. RNA methyltransferase RlmE family. RlmM subfamily. In terms of assembly, monomer.

Its subcellular location is the cytoplasm. The catalysed reaction is cytidine(2498) in 23S rRNA + S-adenosyl-L-methionine = 2'-O-methylcytidine(2498) in 23S rRNA + S-adenosyl-L-homocysteine + H(+). Catalyzes the 2'-O-methylation at nucleotide C2498 in 23S rRNA. In Yersinia pseudotuberculosis serotype O:1b (strain IP 31758), this protein is Ribosomal RNA large subunit methyltransferase M.